Reading from the N-terminus, the 263-residue chain is MKKLMMIGFGAMAAEVYAHLPQDLQLKWIVVPSRSIEKVQSQVSSDIQVISDIEQCDGTPDYVIEVAGQAAVKEHAQKVLAKGWTIGLISVGTLADSEFLVQLKQTAEKNDAHLHLLAGAIAGIDGISAAKEGGLQKVTYKGCKSPKSWKGSYAEQLVDLDHVSEPTVFFTGTAREAAMKFPANANVAATIALAGLGMDETMVELTVDPTINKNKHTIVAEGGFGQMTIELVGVPLPSNPKTSTLAALSVIRACRNSVEAIQI.

Residues Ala-120 and Asn-186 each coordinate NAD(+). Residue His-216 is part of the active site.

It belongs to the L-aspartate dehydrogenase family.

The catalysed reaction is L-aspartate + NADP(+) + H2O = oxaloacetate + NH4(+) + NADPH + H(+). The enzyme catalyses L-aspartate + NAD(+) + H2O = oxaloacetate + NH4(+) + NADH + H(+). The protein operates within cofactor biosynthesis; NAD(+) biosynthesis; iminoaspartate from L-aspartate (dehydrogenase route): step 1/1. Functionally, specifically catalyzes the NAD or NADP-dependent dehydrogenation of L-aspartate to iminoaspartate. In Acinetobacter baumannii (strain AB307-0294), this protein is L-aspartate dehydrogenase.